The chain runs to 314 residues: Olfactory receptor 1E1 (314 aa).

Topologically, residues 1-25 are extracellular; sequence MMGQNQTSISDFLLLGLPIQPEQQN. A glycan (N-linked (GlcNAc...) asparagine) is linked at Asn5. A helical transmembrane segment spans residues 26–49; it reads LCYALFLAMYLTTLLGNLLIIVLI. At 50–57 the chain is on the cytoplasmic side; the sequence is RLDSHLHT. A helical membrane pass occupies residues 58–79; that stretch reads PMYLFLSNLSFSDLCFSSVTIP. At 80–100 the chain is on the extracellular side; it reads KLLQNMQNQDPSIPYADCLTQ. A disulfide bridge links Cys97 with Cys189. Residues 101 to 120 form a helical membrane-spanning segment; it reads MYFFLLFGDLESFLLVAMAY. Residues 121-139 lie on the Cytoplasmic side of the membrane; that stretch reads DRYVAICFALHYTAIMSPM. The helical transmembrane segment at 140 to 158 threads the bilayer; the sequence is LCLSLVALSWVLTTFHAML. Residues 159 to 195 lie on the Extracellular side of the membrane; the sequence is HTLLMARLCFCADNVIPHFFCDMSALLKLACSDTRVN. Residues 196-219 traverse the membrane as a helical segment; sequence EWVIFIMGGLIVVIPFLLILGSYA. At 220-236 the chain is on the cytoplasmic side; that stretch reads RIVSSILKVPSSKGICK. The helical transmembrane segment at 237-259 threads the bilayer; the sequence is AFSTCGSHLSVVSLFYGTVIGLY. The Extracellular portion of the chain corresponds to 260–272; it reads LCPSANSSTLKET. The helical transmembrane segment at 273-292 threads the bilayer; sequence VMAMMYTVVTPMLNPFIYSL. Over 293-314 the chain is Cytoplasmic; that stretch reads RNGDMKGALSRVIHQKKTFFSL.

This sequence belongs to the G-protein coupled receptor 1 family.

It is found in the cell membrane. In terms of biological role, odorant receptor. The sequence is that of Olfactory receptor 1E1 (OR1E1) from Gorilla gorilla gorilla (Western lowland gorilla).